An 83-amino-acid polypeptide reads, in one-letter code: Small ribosomal subunit protein bS16 (83 aa).

It belongs to the bacterial ribosomal protein bS16 family.

The sequence is that of Small ribosomal subunit protein bS16 from Finegoldia magna (strain ATCC 29328 / DSM 20472 / WAL 2508) (Peptostreptococcus magnus).